A 1868-amino-acid polypeptide reads, in one-letter code: Protein TIC 214 (1868 aa).

A run of 6 helical transmembrane segments spans residues 11 to 31, 64 to 84, 87 to 107, 126 to 146, 166 to 186, and 221 to 241; these read LLLLWMNIVNSVVLVGLYYGF, FIMGQFIIFISTYYPPLHLAL, PHTLTVLVLPYLLLHFLFFWN, LSIQYVFLNNLIFQLFNHFIL, ILFVISSFFGWLIGHILLMKS, and IFSILLFITCVCYLGRMPSPI. The segment covering 248–276 has biased composition (basic and acidic residues); that stretch reads ESSKGEEKKKTEKERDVEMETISKTKKIE. Disordered stretches follow at residues 248–277, 617–643, 658–700, 782–806, and 1537–1607; these read ESSKGEEKKKTEKERDVEMETISKTKKIEQ, FDFEEEEEEEEEEDDEEEPTDDHGIRS, DEDT…QAEE, TSDYAGEGAKEEEHEEEKREYKRKE, and YIDP…RKKK. The segment covering 617-636 has biased composition (acidic residues); it reads FDFEEEEEEEEEEDDEEEPT. Residues 674-683 are compositionally biased toward polar residues; that stretch reads AKNSDQAKNS. 3 stretches are compositionally biased toward basic and acidic residues: residues 684–700, 789–806, and 1537–1576; these read DQAKKSDQAKNSDQAEE, GAKEEEHEEEKREYKRKE, and YIDPKVKSNQKERSNPKAESNQKEYLELENRNRDEKERQH.

Belongs to the TIC214 family. Part of the Tic complex.

It is found in the plastid. Its subcellular location is the chloroplast inner membrane. Functionally, involved in protein precursor import into chloroplasts. May be part of an intermediate translocation complex acting as a protein-conducting channel at the inner envelope. This Nuphar advena (Common spatterdock) protein is Protein TIC 214.